A 283-amino-acid polypeptide reads, in one-letter code: Elongation factor Ts (283 aa).

An involved in Mg(2+) ion dislocation from EF-Tu region spans residues 80–83 (TDFV).

It belongs to the EF-Ts family.

Its subcellular location is the cytoplasm. Functionally, associates with the EF-Tu.GDP complex and induces the exchange of GDP to GTP. It remains bound to the aminoacyl-tRNA.EF-Tu.GTP complex up to the GTP hydrolysis stage on the ribosome. The protein is Elongation factor Ts of Haemophilus influenzae (strain 86-028NP).